The sequence spans 406 residues: Putative odorant receptor 65b (406 aa).

The Cytoplasmic segment spans residues Met-1–Lys-55. Residues Trp-56–Thr-76 form a helical membrane-spanning segment. Over Glu-77–Asp-88 the chain is Extracellular. Residues Leu-89–Gly-109 traverse the membrane as a helical segment. Topologically, residues Asp-110–Val-144 are cytoplasmic. A helical membrane pass occupies residues Met-145–Ile-165. The Extracellular portion of the chain corresponds to Thr-166–Glu-218. Residues Gly-219–Leu-239 form a helical membrane-spanning segment. At Arg-240–Asp-275 the chain is on the cytoplasmic side. Residues Val-276–Val-296 form a helical membrane-spanning segment. Topologically, residues Leu-297–Lys-307 are extracellular. Residues Val-308–Tyr-328 form a helical membrane-spanning segment. The Cytoplasmic portion of the chain corresponds to Cys-329–Ser-381. Residues Phe-382–Leu-402 traverse the membrane as a helical segment. Over Lys-403 to Asp-406 the chain is Extracellular.

It belongs to the insect chemoreceptor superfamily. Heteromeric odorant receptor channel (TC 1.A.69) family. Or49a subfamily. As to quaternary structure, interacts with Orco. Complexes exist early in the endomembrane system in olfactory sensory neurons (OSNs), coupling these complexes to the conserved ciliary trafficking pathway.

The protein localises to the cell membrane. Its function is as follows. Odorant receptor which mediates acceptance or avoidance behavior, depending on its substrates. The odorant receptor repertoire encodes a large collection of odor stimuli that vary widely in identity, intensity, and duration. May form a complex with Orco to form odorant-sensing units, providing sensitive and prolonged odorant signaling and calcium permeability. The sequence is that of Putative odorant receptor 65b (Or65b) from Drosophila melanogaster (Fruit fly).